The primary structure comprises 196 residues: Protein LIGHT-DEPENDENT SHORT HYPOCOTYLS 6 (196 aa).

The span at 1–16 (MESADSGRSDPVKGDD) shows a compositional bias: basic and acidic residues. Disordered regions lie at residues 1–36 (MESADSGRSDPVKGDDPGPSFVSSPPATPSRYESQK) and 149–196 (ARGI…AVPP). An ALOG domain is found at 31-158 (RYESQKRRDW…ARGIPYEKKK (128 aa)). The short motif at 156–160 (KKKRK) is the Nuclear localization signal element.

Belongs to the plant homeotic and developmental regulators ALOG protein family.

The protein localises to the nucleus. Probable transcription regulator that acts as a developmental regulator by promoting cell growth in response to light. The chain is Protein LIGHT-DEPENDENT SHORT HYPOCOTYLS 6 (LSH6) from Arabidopsis thaliana (Mouse-ear cress).